The following is a 336-amino-acid chain: Ferredoxin--NADP reductase 1 (336 aa).

FAD-binding residues include Glu37, Lys45, Phe50, Val90, Leu125, Asp287, and Thr328.

Belongs to the ferredoxin--NADP reductase type 2 family. Homodimer. Requires FAD as cofactor.

It catalyses the reaction 2 reduced [2Fe-2S]-[ferredoxin] + NADP(+) + H(+) = 2 oxidized [2Fe-2S]-[ferredoxin] + NADPH. In Bacillus subtilis (strain 168), this protein is Ferredoxin--NADP reductase 1 (ycgT).